Reading from the N-terminus, the 368-residue chain is WD repeat-containing protein wdr-5.1 (368 aa).

Residues 1–64 (MDPAQNQPNT…APTTSQESTI (64 aa)) are disordered. The span at 16–42 (PAVEEAQGVNNSEAEAPAPAALSSVSP) shows a compositional bias: low complexity. WD repeat units lie at residues 77 to 116 (GHTK…CERT), 119 to 158 (GHKL…MAKT), 161 to 200 (GHTN…CVKT), 203 to 242 (AHSD…CVKT), 246 to 285 (DENP…TLKQ), 288 to 330 (GHEN…VVQS), and 333 to 368 (GHTQ…RSDS).

In Caenorhabditis briggsae, this protein is WD repeat-containing protein wdr-5.1.